A 127-amino-acid polypeptide reads, in one-letter code: Glycine cleavage system H protein (127 aa).

In terms of domain architecture, Lipoyl-binding spans 22 to 104; sequence KVRIGITDFA…YEKAWMIVIE (83 aa). N6-lipoyllysine is present on Lys63.

Belongs to the GcvH family. The glycine cleavage system is composed of four proteins: P, T, L and H. Requires (R)-lipoate as cofactor.

Functionally, the glycine cleavage system catalyzes the degradation of glycine. The H protein shuttles the methylamine group of glycine from the P protein to the T protein. Its function is as follows. Is also involved in protein lipoylation via its role as an octanoyl/lipoyl carrier protein intermediate. The sequence is that of Glycine cleavage system H protein from Geobacillus thermodenitrificans (strain NG80-2).